The primary structure comprises 346 residues: Tryptophan--tRNA ligase (346 aa).

ATP-binding positions include 10–12 and 18–19; these read QAS and GN. A 'HIGH' region motif is present at residues 11 to 19; that stretch reads ASGKQHLGN. Asp-140 provides a ligand contact to L-tryptophan. ATP contacts are provided by residues 152 to 154, Ile-191, and 200 to 204; these read GND and KMSKS. The 'KMSKS' region motif lies at 200 to 204; the sequence is KMSKS.

Belongs to the class-I aminoacyl-tRNA synthetase family. In terms of assembly, homodimer.

The protein localises to the cytoplasm. It catalyses the reaction tRNA(Trp) + L-tryptophan + ATP = L-tryptophyl-tRNA(Trp) + AMP + diphosphate + H(+). Its function is as follows. Catalyzes the attachment of tryptophan to tRNA(Trp). This Mycoplasma pneumoniae (strain ATCC 29342 / M129 / Subtype 1) (Mycoplasmoides pneumoniae) protein is Tryptophan--tRNA ligase.